Reading from the N-terminus, the 317-residue chain is Malate dehydrogenase (317 aa).

NAD(+) contacts are provided by residues 15-20 (GSGNIG) and Asp-39. Residues Arg-88 and Arg-94 each contribute to the substrate site. NAD(+) contacts are provided by residues Asn-101 and 124–126 (VTN). Substrate contacts are provided by Asn-126 and Arg-157. The active-site Proton acceptor is His-181.

The protein belongs to the LDH/MDH superfamily. MDH type 3 family.

It carries out the reaction (S)-malate + NAD(+) = oxaloacetate + NADH + H(+). Its function is as follows. Catalyzes the reversible oxidation of malate to oxaloacetate. This Ehrlichia ruminantium (strain Gardel) protein is Malate dehydrogenase.